The sequence spans 433 residues: FAD-dependent monooxygenase notI' (433 aa).

The FAD site is built by glutamate 45 and arginine 117. The active site involves arginine 195. Residues aspartate 314 and alanine 327 each contribute to the FAD site.

The protein belongs to the paxM FAD-dependent monooxygenase family. The cofactor is FAD.

It functions in the pathway alkaloid biosynthesis. Functionally, FAD-dependent monooxygenase; part of the gene cluster that mediates the biosynthesis of notoamide, a fungal indole alkaloid that belongs to a family of natural products containing a characteristic bicyclo[2.2.2]diazaoctane core. The first step of notoamide biosynthesis involves coupling of L-proline and L-tryptophan by the bimodular NRPS notE', to produce cyclo-L-tryptophan-L-proline called brevianamide F. The reverse prenyltransferase notF' then acts as a deoxybrevianamide E synthase and converts brevianamide F to deoxybrevianamide E via reverse prenylation at C-2 of the indole ring leading to the bicyclo[2.2.2]diazaoctane core. Deoxybrevianamide E is further hydroxylated at C-6 of the indole ring, likely catalyzed by the cytochrome P450 monooxygenase notG', to yield 6-hydroxy-deoxybrevianamide E. 6-hydroxy-deoxybrevianamide E is a specific substrate of the prenyltransferase notC' for normal prenylation at C-7 to produce 6-hydroxy-7-prenyl-deoxybrevianamide, also called notoamide S. As the proposed pivotal branching point in notoamide biosynthesis, notoamide S can be diverted to notoamide E through an oxidative pyran ring closure putatively catalyzed by either notH' cytochrome P450 monooxygenase or the notD' FAD-linked oxidoreductase. This step would be followed by an indole 2,3-epoxidation-initiated pinacol-like rearrangement catalyzed by the notB' FAD-dependent monooxygenase leading to the formation of notoamide C and notoamide D. On the other hand notoamide S is converted to notoamide T by notH' (or notD'), a bifunctional oxidase that also functions as the intramolecular Diels-Alderase responsible for generation of (-)-notoamide T. To generate antipodal (+)-notoaminide T, notH (or notD) in Aspergillus strain MF297-2 is expected to catalyze a Diels-Alder reaction leading to the opposite stereochemistry. The remaining oxidoreductase notD' (or notH') likely catalyzes the oxidative pyran ring formation to yield (-)-stephacidin A. The FAD-dependent monooxygenase notI' is highly similar to notB' and is predicted to catalyze a similar conversion from (-)-stephacidin A to (+)-notoamide B via the 2,3-epoxidation of (-)-stephacidin A followed by a pinacol-type rearrangement. Finally, it remains unclear which enzyme could be responsible for the final hydroxylation steps leading to notoamide A and sclerotiamide. The sequence is that of FAD-dependent monooxygenase notI' from Aspergillus versicolor.